The following is a 732-amino-acid chain: Prolyl endopeptidase-like (732 aa).

Residues serine 575, aspartate 661, and histidine 707 each act as charge relay system in the active site.

The protein belongs to the peptidase S9A family. Homodimer.

The protein resides in the cytoplasm. It localises to the cytosol. Serine peptidase whose precise substrate specificity remains unclear. Does not cleave peptides after a arginine or lysine residue. Regulates trans-Golgi network morphology and sorting by regulating the membrane binding of the AP-1 complex. May play a role in the regulation of synaptic vesicle exocytosis. In Gallus gallus (Chicken), this protein is Prolyl endopeptidase-like (PREPL).